The primary structure comprises 413 residues: Probable tRNA pseudouridine synthase D (413 aa).

Asp97 functions as the Nucleophile in the catalytic mechanism. A TRUD domain is found at 167-370; it reads AVPNYYGYQR…YGSYRRARLE (204 aa).

This sequence belongs to the pseudouridine synthase TruD family.

The catalysed reaction is uridine(13) in tRNA = pseudouridine(13) in tRNA. Could be responsible for synthesis of pseudouridine from uracil-13 in transfer RNAs. The chain is Probable tRNA pseudouridine synthase D from Pyrobaculum arsenaticum (strain DSM 13514 / JCM 11321 / PZ6).